Reading from the N-terminus, the 99-residue chain is MKFFVIALIVLLGLLQYRLWSGDNSLPEYFVLQKQIAAQQDGNAKLNERNQVLKEEIIDLKSGTEAIEERARNELGMVKEGETFYRVVGGDRSVSSPSQ.

The Cytoplasmic portion of the chain corresponds to 1-3; the sequence is MKF. Residues 4-21 form a helical membrane-spanning segment; sequence FVIALIVLLGLLQYRLWS. Over 22–99 the chain is Periplasmic; it reads GDNSLPEYFV…GDRSVSSPSQ (78 aa). A coiled-coil region spans residues 31–73; that stretch reads VLQKQIAAQQDGNAKLNERNQVLKEEIIDLKSGTEAIEERARN.

Belongs to the FtsB family. In terms of assembly, part of a complex composed of FtsB, FtsL and FtsQ.

The protein localises to the cell inner membrane. Essential cell division protein. May link together the upstream cell division proteins, which are predominantly cytoplasmic, with the downstream cell division proteins, which are predominantly periplasmic. The protein is Cell division protein FtsB of Shewanella sp. (strain MR-4).